A 954-amino-acid chain; its full sequence is Glycine dehydrogenase (decarboxylating) (954 aa).

Lys-701 bears the N6-(pyridoxal phosphate)lysine mark.

It belongs to the GcvP family. In terms of assembly, the glycine cleavage system is composed of four proteins: P, T, L and H. Pyridoxal 5'-phosphate is required as a cofactor.

It carries out the reaction N(6)-[(R)-lipoyl]-L-lysyl-[glycine-cleavage complex H protein] + glycine + H(+) = N(6)-[(R)-S(8)-aminomethyldihydrolipoyl]-L-lysyl-[glycine-cleavage complex H protein] + CO2. The glycine cleavage system catalyzes the degradation of glycine. The P protein binds the alpha-amino group of glycine through its pyridoxal phosphate cofactor; CO(2) is released and the remaining methylamine moiety is then transferred to the lipoamide cofactor of the H protein. This is Glycine dehydrogenase (decarboxylating) from Bordetella parapertussis (strain 12822 / ATCC BAA-587 / NCTC 13253).